The chain runs to 337 residues: Glyceraldehyde-3-phosphate dehydrogenase (337 aa).

NAD(+)-binding positions include 11-12 (RI), Asp-33, and Lys-78. D-glyceraldehyde 3-phosphate contacts are provided by residues 149–151 (SCT), Thr-180, 209–210 (TG), and Arg-232. Cys-150 acts as the Nucleophile in catalysis. Residue Asn-314 coordinates NAD(+).

It belongs to the glyceraldehyde-3-phosphate dehydrogenase family. Homotetramer.

Its subcellular location is the cytoplasm. It carries out the reaction D-glyceraldehyde 3-phosphate + phosphate + NAD(+) = (2R)-3-phospho-glyceroyl phosphate + NADH + H(+). Its pathway is carbohydrate degradation; glycolysis; pyruvate from D-glyceraldehyde 3-phosphate: step 1/5. The chain is Glyceraldehyde-3-phosphate dehydrogenase (GPD) from Lyophyllum shimeji (Hon-shimeji).